The sequence spans 297 residues: 4-diphosphocytidyl-2-C-methyl-D-erythritol kinase (297 aa).

The active site involves K22. ATP is bound at residue P111–S121. D153 is a catalytic residue.

Belongs to the GHMP kinase family. IspE subfamily.

The catalysed reaction is 4-CDP-2-C-methyl-D-erythritol + ATP = 4-CDP-2-C-methyl-D-erythritol 2-phosphate + ADP + H(+). Its pathway is isoprenoid biosynthesis; isopentenyl diphosphate biosynthesis via DXP pathway; isopentenyl diphosphate from 1-deoxy-D-xylulose 5-phosphate: step 3/6. In terms of biological role, catalyzes the phosphorylation of the position 2 hydroxy group of 4-diphosphocytidyl-2C-methyl-D-erythritol. The protein is 4-diphosphocytidyl-2-C-methyl-D-erythritol kinase of Polaromonas naphthalenivorans (strain CJ2).